The primary structure comprises 338 residues: Holliday junction branch migration complex subunit RuvB (338 aa).

Residues 1 to 180 (MERLLDNKFS…FGIIERLDYY (180 aa)) are large ATPase domain (RuvB-L). ATP-binding residues include Leu-19, Arg-20, Gly-61, Lys-64, Thr-65, Thr-66, Arg-170, Tyr-180, and Arg-217. Thr-65 contributes to the Mg(2+) binding site. The segment at 181–251 (TVEELSQIVM…VAKSGLEMFE (71 aa)) is small ATPAse domain (RuvB-S). The head domain (RuvB-H) stretch occupies residues 254–338 (EYGLDLVDRN…FNVKESGDKR (85 aa)). The DNA site is built by Lys-309 and Arg-314.

Belongs to the RuvB family. Homohexamer. Forms an RuvA(8)-RuvB(12)-Holliday junction (HJ) complex. HJ DNA is sandwiched between 2 RuvA tetramers; dsDNA enters through RuvA and exits via RuvB. An RuvB hexamer assembles on each DNA strand where it exits the tetramer. Each RuvB hexamer is contacted by two RuvA subunits (via domain III) on 2 adjacent RuvB subunits; this complex drives branch migration. In the full resolvosome a probable DNA-RuvA(4)-RuvB(12)-RuvC(2) complex forms which resolves the HJ.

Its subcellular location is the cytoplasm. The catalysed reaction is ATP + H2O = ADP + phosphate + H(+). Functionally, the RuvA-RuvB-RuvC complex processes Holliday junction (HJ) DNA during genetic recombination and DNA repair, while the RuvA-RuvB complex plays an important role in the rescue of blocked DNA replication forks via replication fork reversal (RFR). RuvA specifically binds to HJ cruciform DNA, conferring on it an open structure. The RuvB hexamer acts as an ATP-dependent pump, pulling dsDNA into and through the RuvAB complex. RuvB forms 2 homohexamers on either side of HJ DNA bound by 1 or 2 RuvA tetramers; 4 subunits per hexamer contact DNA at a time. Coordinated motions by a converter formed by DNA-disengaged RuvB subunits stimulates ATP hydrolysis and nucleotide exchange. Immobilization of the converter enables RuvB to convert the ATP-contained energy into a lever motion, pulling 2 nucleotides of DNA out of the RuvA tetramer per ATP hydrolyzed, thus driving DNA branch migration. The RuvB motors rotate together with the DNA substrate, which together with the progressing nucleotide cycle form the mechanistic basis for DNA recombination by continuous HJ branch migration. Branch migration allows RuvC to scan DNA until it finds its consensus sequence, where it cleaves and resolves cruciform DNA. In Caldicellulosiruptor saccharolyticus (strain ATCC 43494 / DSM 8903 / Tp8T 6331), this protein is Holliday junction branch migration complex subunit RuvB.